A 480-amino-acid chain; its full sequence is Iroquois-class homeodomain protein IRX-1 (480 aa).

The segment at residues 125 to 188 (YGDPGRPKNA…ANARRRLKKE (64 aa)) is a DNA-binding region (homeobox; TALE-type). Disordered regions lie at residues 190–268 (KVTW…QGSP), 280–354 (SPLG…PLQH), and 401–480 (PHGP…LPSA). Over residues 210 to 228 (TEGDPEKAEDDEEIDLESI) the composition is skewed to acidic residues. Residues 229–239 (DIDKIDEHDGD) are compositionally biased toward basic and acidic residues. Position 241 is a phosphoserine (S241). Low complexity-rich tracts occupy residues 252 to 262 (PHAPAAPSALA) and 340 to 351 (HPGAHGPSAGAP). The segment covering 404–417 (PHLPAPPPPQPPVA) has biased composition (pro residues).

It belongs to the TALE/IRO homeobox family.

The protein localises to the nucleus. This is Iroquois-class homeodomain protein IRX-1 (IRX1) from Homo sapiens (Human).